A 370-amino-acid polypeptide reads, in one-letter code: tRNA pseudouridine(27/28) synthase (370 aa).

Catalysis depends on Asp56, which acts as the Nucleophile. Tyr111 is a substrate binding site.

The protein belongs to the tRNA pseudouridine synthase TruA family.

Its subcellular location is the mitochondrion. It carries out the reaction uridine(27/28) in mitochondrial tRNA = pseudouridine(27/28) in mitochondrial tRNA. Mitochondrial-specific pseudouridine synthase catalyzing the formation of pseudouridine at positions 27 and 28 in the anticodon stem and loop of mitochondrial transfer RNAs. The protein is tRNA pseudouridine(27/28) synthase (PUS2) of Saccharomyces cerevisiae (strain ATCC 204508 / S288c) (Baker's yeast).